The primary structure comprises 262 residues: 3-deoxy-manno-octulosonate cytidylyltransferase (262 aa).

This sequence belongs to the KdsB family.

The protein resides in the cytoplasm. The catalysed reaction is 3-deoxy-alpha-D-manno-oct-2-ulosonate + CTP = CMP-3-deoxy-beta-D-manno-octulosonate + diphosphate. The protein operates within nucleotide-sugar biosynthesis; CMP-3-deoxy-D-manno-octulosonate biosynthesis; CMP-3-deoxy-D-manno-octulosonate from 3-deoxy-D-manno-octulosonate and CTP: step 1/1. It functions in the pathway bacterial outer membrane biogenesis; lipopolysaccharide biosynthesis. In terms of biological role, activates KDO (a required 8-carbon sugar) for incorporation into bacterial lipopolysaccharide in Gram-negative bacteria. This Blochmanniella pennsylvanica (strain BPEN) protein is 3-deoxy-manno-octulosonate cytidylyltransferase.